The sequence spans 66 residues: Large ribosomal subunit protein bL31 (66 aa).

Residues cysteine 16, cysteine 18, cysteine 36, and cysteine 39 each coordinate Zn(2+).

This sequence belongs to the bacterial ribosomal protein bL31 family. Type A subfamily. Part of the 50S ribosomal subunit. Zn(2+) serves as cofactor.

In terms of biological role, binds the 23S rRNA. The sequence is that of Large ribosomal subunit protein bL31 from Campylobacter lari (strain RM2100 / D67 / ATCC BAA-1060).